Consider the following 296-residue polypeptide: MTLNNVTMRQGTVGMQPQQQRWSIPADGRHLMVQKEPHQYSHRNRHSATPEDHCRRSWSSDSTDSVISSESGNTYYRVVLIGEQGVGKSTLANIFAGVHDSMDSDCEVLGEDTYERTLMVDGESATIILLDMWENKGENEWLHDHCMQVGDAYLIVYSITDRASFEKASELRIQLRRARQTEDIPIILVGNKSDLVRCREVSVSEGRACAVVFDCKFIETSAAVQHNVKELFEGIVRQVRLRRDSKEKNERRLAYQKRKESMPRKARRFWGKIVAKNNKNMAFKLKSKSCHDLSVL.

2 disordered regions span residues 1 to 20 and 37 to 68; these read MTLNNVTMRQGTVGMQPQQQ and PHQYSHRNRHSATPEDHCRRSWSSDSTDSVIS. A compositionally biased stretch (low complexity) spans 57–68; it reads SWSSDSTDSVIS. GTP contacts are provided by residues 82 to 89 and 191 to 194; these read GEQGVGKS and NKSD. The calmodulin-binding stretch occupies residues 266–285; sequence ARRFWGKIVAKNNKNMAFKL.

It belongs to the small GTPase superfamily. RGK family. As to quaternary structure, interacts with calmodulin in a Ca(2+)-dependent manner. Binds ROCK1. In terms of processing, phosphorylated on tyrosine residues. In terms of tissue distribution, most abundant in thymus, spleen, kidney, lung, and testis. Less abundant in heart, brain, liver and skeletal muscle.

It localises to the cell membrane. Its function is as follows. Could be a regulatory protein, possibly participating in receptor-mediated signal transduction at the plasma membrane. Has guanine nucleotide-binding activity but undetectable intrinsic GTPase activity. This chain is GTP-binding protein GEM (GEM), found in Homo sapiens (Human).